We begin with the raw amino-acid sequence, 459 residues long: Cysteine--tRNA ligase (459 aa).

Position 28 (cysteine 28) interacts with Zn(2+). A 'HIGH' region motif is present at residues 30-40 (VTIYDLCHIGH). Cysteine 209, histidine 234, and glutamate 238 together coordinate Zn(2+). The short motif at 266-270 (KMSKS) is the 'KMSKS' region element. Lysine 269 provides a ligand contact to ATP.

Belongs to the class-I aminoacyl-tRNA synthetase family. In terms of assembly, monomer. It depends on Zn(2+) as a cofactor.

The protein localises to the cytoplasm. The catalysed reaction is tRNA(Cys) + L-cysteine + ATP = L-cysteinyl-tRNA(Cys) + AMP + diphosphate. The protein is Cysteine--tRNA ligase of Shewanella baltica (strain OS155 / ATCC BAA-1091).